The sequence spans 137 residues: Small heat shock protein IbpA (137 aa).

Positions Ser28–Asn137 constitute a sHSP domain.

The protein belongs to the small heat shock protein (HSP20) family. Monomer. Forms homomultimers of about 100-150 subunits at optimal growth temperatures. Conformation changes to monomers at high temperatures or high ionic concentrations.

The protein resides in the cytoplasm. In terms of biological role, associates with aggregated proteins, together with IbpB, to stabilize and protect them from irreversible denaturation and extensive proteolysis during heat shock and oxidative stress. Aggregated proteins bound to the IbpAB complex are more efficiently refolded and reactivated by the ATP-dependent chaperone systems ClpB and DnaK/DnaJ/GrpE. Its activity is ATP-independent. In Citrobacter koseri (strain ATCC BAA-895 / CDC 4225-83 / SGSC4696), this protein is Small heat shock protein IbpA.